The following is a 374-amino-acid chain: Actin-related protein 2/3 complex subunit 2B (374 aa).

The protein belongs to the ARPC2 family. In terms of assembly, component of the Arp2/3 complex composed of ARP2, ARP3, ARPC1/p41-ARC, ARPC2/p34-ARC, ARPC3/p21-ARC, ARPC4/p20-ARC and ARPC5/p16-ARC. Expressed at low levels in all tissues with a relatively highest expression in inflorescences.

The protein resides in the cytoplasm. Its subcellular location is the cytoskeleton. It is found in the cell projection. Functionally, functions as actin-binding component of the Arp2/3 complex which is involved in regulation of actin polymerization and together with an activating nucleation-promoting factor (NPF) mediates the formation of branched actin networks. Seems to contact the mother actin filament. Arp2/3 complex plays a critical role in the control of cell morphogenesis via the modulation of cell polarity development. The chain is Actin-related protein 2/3 complex subunit 2B (ARPC2B) from Arabidopsis thaliana (Mouse-ear cress).